The primary structure comprises 135 residues: uncharacterized protein (135 aa).

This is an uncharacterized protein from Archaeoglobus fulgidus (strain ATCC 49558 / DSM 4304 / JCM 9628 / NBRC 100126 / VC-16).